Consider the following 977-residue polypeptide: Vacuolar membrane protease (977 aa).

At methionine 1 to arginine 17 the chain is on the cytoplasmic side. A helical membrane pass occupies residues valine 18–valine 38. The Vacuolar portion of the chain corresponds to histidine 39 to leucine 383. 2 N-linked (GlcNAc...) asparagine glycosylation sites follow: asparagine 113 and asparagine 116. 2 residues coordinate Zn(2+): histidine 166 and aspartate 178. Glutamate 212 acts as the Proton acceptor in catalysis. Positions 213, 238, and 311 each coordinate Zn(2+). Residues phenylalanine 384 to isoleucine 404 form a helical membrane-spanning segment. Topologically, residues leucine 405–phenylalanine 438 are cytoplasmic. A helical transmembrane segment spans residues proline 439–isoleucine 459. The Vacuolar portion of the chain corresponds to asparagine 460–tyrosine 469. A helical membrane pass occupies residues alanine 470 to alanine 490. Residues asparagine 491–arginine 500 lie on the Cytoplasmic side of the membrane. A helical membrane pass occupies residues isoleucine 501–tyrosine 521. At glutamate 522 to aspartate 525 the chain is on the vacuolar side. A helical transmembrane segment spans residues glycine 526–isoleucine 546. At serine 547 to tryptophan 659 the chain is on the cytoplasmic side. Polar residues predominate over residues glycine 566–glycine 576. A disordered region spans residues glycine 566–leucine 604. A helical membrane pass occupies residues isoleucine 660–leucine 680. Topologically, residues isoleucine 681–leucine 696 are vacuolar. The helical transmembrane segment at valine 697–isoleucine 717 threads the bilayer. At histidine 718–threonine 726 the chain is on the cytoplasmic side. Residues phenylalanine 727–glycine 747 form a helical membrane-spanning segment. Residues asparagine 748–valine 977 lie on the Vacuolar side of the membrane. N-linked (GlcNAc...) asparagine glycans are attached at residues asparagine 749 and asparagine 791.

This sequence belongs to the peptidase M28 family. Zn(2+) serves as cofactor.

It is found in the vacuole membrane. In terms of biological role, may be involved in vacuolar sorting and osmoregulation. This chain is Vacuolar membrane protease, found in Talaromyces marneffei (strain ATCC 18224 / CBS 334.59 / QM 7333) (Penicillium marneffei).